Reading from the N-terminus, the 293-residue chain is Release factor glutamine methyltransferase (293 aa).

S-adenosyl-L-methionine-binding positions include 130-134 (GTGSG), Asp153, Trp182, and Asn199. 199–202 (NPPY) is a substrate binding site.

It belongs to the protein N5-glutamine methyltransferase family. PrmC subfamily.

The enzyme catalyses L-glutaminyl-[peptide chain release factor] + S-adenosyl-L-methionine = N(5)-methyl-L-glutaminyl-[peptide chain release factor] + S-adenosyl-L-homocysteine + H(+). Methylates the class 1 translation termination release factors RF1/PrfA and RF2/PrfB on the glutamine residue of the universally conserved GGQ motif. The polypeptide is Release factor glutamine methyltransferase (Prochlorococcus marinus (strain SARG / CCMP1375 / SS120)).